Reading from the N-terminus, the 264-residue chain is Type III pantothenate kinase (264 aa).

6-13 contributes to the ATP binding site; it reads DVGNTNIK. 108-111 serves as a coordination point for substrate; sequence GSDR. Catalysis depends on aspartate 110, which acts as the Proton acceptor. Residue threonine 134 coordinates ATP.

This sequence belongs to the type III pantothenate kinase family. Homodimer. NH4(+) is required as a cofactor. The cofactor is K(+).

It is found in the cytoplasm. The catalysed reaction is (R)-pantothenate + ATP = (R)-4'-phosphopantothenate + ADP + H(+). It functions in the pathway cofactor biosynthesis; coenzyme A biosynthesis; CoA from (R)-pantothenate: step 1/5. In terms of biological role, catalyzes the phosphorylation of pantothenate (Pan), the first step in CoA biosynthesis. The protein is Type III pantothenate kinase of Ehrlichia canis (strain Jake).